Reading from the N-terminus, the 1770-residue chain is Transposon Ty2-OR2 Gag-Pol polyprotein (1770 aa).

2 disordered regions span residues 1 to 88 and 359 to 449; these read MESQ…YQQH and QHSE…SNDE. Polar residues-rich tracts occupy residues 19 to 39 and 49 to 60; these read ASVTSKEVPSNQDPLAVSASN and KVNSQEETTPGT. The interval 295 to 397 is RNA-binding; sequence ENNINVSDRL…SSKPRAAKAH (103 aa). Residues 369–381 show a composition bias toward low complexity; that stretch reads TSPNTTNTKVTTR. 2 stretches are compositionally biased toward polar residues: residues 399-408 and 415-435; these read IATSSKFSRV and ESTVSSQYLSDDNELSLGQQQ. Asp-457 acts as the For protease activity; shared with dimeric partner in catalysis. Positions 579-636 are integrase-type zinc finger-like; that stretch reads NVNKSKSVNKYPYPLIHRMLGHANFRSIQKSLKKNAVTYLKESDIEWSNASTYQCPDC. In terms of domain architecture, Integrase catalytic spans 656 to 831; it reads ESYEPFQYLH…AGLDITTILP (176 aa). Residues Asp-667 and Asp-732 each coordinate Mg(2+). Disordered regions lie at residues 1005-1038, 1057-1135, 1146-1165, and 1170-1205; these read GGTIESDTTSPRHSSTFTARNQKRPGSPNDMIDL, GGTE…KSSK, LPLPDLTHKSPTDTSDVSKD, and HSRQTNSSLGGMDDSNVLTTTKSKKRSLEDNETEIE. Polar residues-rich tracts occupy residues 1009 to 1024 and 1065 to 1082; these read ESDTTSPRHSSTFTAR and QRNSDTNIKYRTTNSTPS. Over residues 1151–1165 the composition is skewed to basic and acidic residues; sequence LTHKSPTDTSDVSKD. Positions 1193–1227 match the Bipartite nuclear localization signal motif; that stretch reads KKRSLEDNETEIEVSRDTWNNKNMRSLEPPRSKKR. Residues 1353–1491 enclose the Reverse transcriptase Ty1/copia-type domain; sequence NDYYITQLDI…DILGLEIKYQ (139 aa). Mg(2+) is bound by residues Asp-1361, Asp-1442, Asp-1443, Asp-1625, Glu-1667, and Asp-1700. One can recognise an RNase H Ty1/copia-type domain in the interval 1625 to 1767; that stretch reads DASYGNQPYY…IKTFKLLTNK (143 aa).

The capsid protein forms a homotrimer, from which the VLPs are assembled. The protease is a homodimer, whose active site consists of two apposed aspartic acid residues. In terms of processing, initially, virus-like particles (VLPs) are composed of the structural unprocessed proteins Gag and Gag-Pol, and also contain the host initiator methionine tRNA (tRNA(i)-Met) which serves as a primer for minus-strand DNA synthesis, and a dimer of genomic Ty RNA. Processing of the polyproteins occurs within the particle and proceeds by an ordered pathway, called maturation. First, the protease (PR) is released by autocatalytic cleavage of the Gag-Pol polyprotein, and this cleavage is a prerequisite for subsequent processing at the remaining sites to release the mature structural and catalytic proteins. Maturation takes place prior to the RT reaction and is required to produce transposition-competent VLPs.

The protein resides in the cytoplasm. Its subcellular location is the nucleus. The enzyme catalyses DNA(n) + a 2'-deoxyribonucleoside 5'-triphosphate = DNA(n+1) + diphosphate. The catalysed reaction is Endonucleolytic cleavage to 5'-phosphomonoester.. Its function is as follows. Capsid protein (CA) is the structural component of the virus-like particle (VLP), forming the shell that encapsulates the retrotransposons dimeric RNA genome. The particles are assembled from trimer-clustered units and there are holes in the capsid shells that allow for the diffusion of macromolecules. CA also has nucleocapsid-like chaperone activity, promoting primer tRNA(i)-Met annealing to the multipartite primer-binding site (PBS), dimerization of Ty2 RNA and initiation of reverse transcription. Functionally, the aspartyl protease (PR) mediates the proteolytic cleavages of the Gag and Gag-Pol polyproteins after assembly of the VLP. In terms of biological role, reverse transcriptase/ribonuclease H (RT) is a multifunctional enzyme that catalyzes the conversion of the retro-elements RNA genome into dsDNA within the VLP. The enzyme displays a DNA polymerase activity that can copy either DNA or RNA templates, and a ribonuclease H (RNase H) activity that cleaves the RNA strand of RNA-DNA heteroduplexes during plus-strand synthesis and hydrolyzes RNA primers. The conversion leads to a linear dsDNA copy of the retrotransposon that includes long terminal repeats (LTRs) at both ends. Integrase (IN) targets the VLP to the nucleus, where a subparticle preintegration complex (PIC) containing at least integrase and the newly synthesized dsDNA copy of the retrotransposon must transit the nuclear membrane. Once in the nucleus, integrase performs the integration of the dsDNA into the host genome. The protein is Transposon Ty2-OR2 Gag-Pol polyprotein (TY2B-OR2) of Saccharomyces cerevisiae (strain ATCC 204508 / S288c) (Baker's yeast).